A 144-amino-acid polypeptide reads, in one-letter code: Large ribosomal subunit protein uL15 (144 aa).

The interval 1–52 (MRLNSLSPAEGAKHSAKRLGRGIGSGLGKTGGRGHKGQKSRTGGGVRRGFEG) is disordered. Over residues 21–31 (RGIGSGLGKTG) the composition is skewed to gly residues.

The protein belongs to the universal ribosomal protein uL15 family. Part of the 50S ribosomal subunit.

Binds to the 23S rRNA. The protein is Large ribosomal subunit protein uL15 of Haemophilus ducreyi (strain 35000HP / ATCC 700724).